The following is a 583-amino-acid chain: Isocitrate dehydrogenase kinase/phosphatase (583 aa).

ATP is bound by residues 315–321 and K336; that span reads APGIRGM. Residue D371 is part of the active site.

The protein belongs to the AceK family.

It localises to the cytoplasm. The catalysed reaction is L-seryl-[isocitrate dehydrogenase] + ATP = O-phospho-L-seryl-[isocitrate dehydrogenase] + ADP + H(+). Its function is as follows. Bifunctional enzyme which can phosphorylate or dephosphorylate isocitrate dehydrogenase (IDH) on a specific serine residue. This is a regulatory mechanism which enables bacteria to bypass the Krebs cycle via the glyoxylate shunt in response to the source of carbon. When bacteria are grown on glucose, IDH is fully active and unphosphorylated, but when grown on acetate or ethanol, the activity of IDH declines drastically concomitant with its phosphorylation. The protein is Isocitrate dehydrogenase kinase/phosphatase of Salmonella heidelberg (strain SL476).